Reading from the N-terminus, the 90-residue chain is Co-chaperonin GroES (90 aa).

This sequence belongs to the GroES chaperonin family. Heptamer of 7 subunits arranged in a ring. Interacts with the chaperonin GroEL.

The protein resides in the cytoplasm. Its function is as follows. Together with the chaperonin GroEL, plays an essential role in assisting protein folding. The GroEL-GroES system forms a nano-cage that allows encapsulation of the non-native substrate proteins and provides a physical environment optimized to promote and accelerate protein folding. GroES binds to the apical surface of the GroEL ring, thereby capping the opening of the GroEL channel. The protein is Co-chaperonin GroES of Phocaeicola vulgatus (strain ATCC 8482 / DSM 1447 / JCM 5826 / CCUG 4940 / NBRC 14291 / NCTC 11154) (Bacteroides vulgatus).